The sequence spans 319 residues: Ribosomal large subunit pseudouridine synthase C (319 aa).

The S4 RNA-binding domain occupies 20–83 (QRIDNFLRTQ…AEREEEAVSP (64 aa)). Asp-144 is a catalytic residue.

Belongs to the pseudouridine synthase RluA family.

The catalysed reaction is uridine(955/2504/2580) in 23S rRNA = pseudouridine(955/2504/2580) in 23S rRNA. Its function is as follows. Responsible for synthesis of pseudouridine from uracil at positions 955, 2504 and 2580 in 23S ribosomal RNA. This Escherichia coli (strain K12) protein is Ribosomal large subunit pseudouridine synthase C.